We begin with the raw amino-acid sequence, 20 residues long: Alkaline phosphatase (20 aa).

Positions 1-20 (TDMLAVSVSSTDAIGHKYGT) are disordered.

Homodimer; may be disulfide-linked. The N-terminus is blocked.

It catalyses the reaction a phosphate monoester + H2O = an alcohol + phosphate. With respect to regulation, completely inhibited by thiol-reducing agents, such as DTT and 2-mercaptoethanol. Activity was also inhibited by sodium orthovanadate, sodium molybdate, N-ethylmaleimide, EDTA and zinc ion, but was not inhibited by okadaic acid. Acts against tyrosine-phosphatases. The chain is Alkaline phosphatase from Prevotella intermedia.